Consider the following 300-residue polypeptide: Cation-efflux pump FieF (300 aa).

Residues 24–44 traverse the membrane as a helical segment; that stretch reads LLIKIFAWWYTGSVSILAALV. Zn(2+) contacts are provided by D45 and D49. 2 consecutive transmembrane segments (helical) span residues 82–102 and 114–134; these read AALA…LTSI and PGVG…LVTF. Zn(2+) is bound by residues H153 and D157. The next 2 membrane-spanning stretches (helical) occupy residues 156–176 and 178–198; these read SDVM…YGWH and ADAL…LRMG.

It belongs to the cation diffusion facilitator (CDF) transporter (TC 2.A.4) family. FieF subfamily. In terms of assembly, homodimer.

It is found in the cell inner membrane. The catalysed reaction is Zn(2+)(in) + H(+)(out) = Zn(2+)(out) + H(+)(in). The enzyme catalyses Cd(2+)(in) + H(+)(out) = Cd(2+)(out) + H(+)(in). It catalyses the reaction Fe(2+)(in) + H(+)(out) = Fe(2+)(out) + H(+)(in). Functionally, divalent metal cation transporter which exports Zn(2+), Cd(2+) and possibly Fe(2+). May be involved in zinc and iron detoxification by efflux. The polypeptide is Cation-efflux pump FieF (Salmonella enteritidis PT4 (strain P125109)).